Here is a 143-residue protein sequence, read N- to C-terminus: Probable FAD-linked sulfhydryl oxidase R368 (143 aa).

One can recognise an ERV/ALR sulfhydryl oxidase domain in the interval 10 to 104 (GWTFSHAVAL…YPEAIEAIEK (95 aa)). A disulfide bridge links cysteine 46 with cysteine 49. Residues 117–137 (FFIILIIIGIIVIIYLMYIVF) traverse the membrane as a helical segment.

It depends on FAD as a cofactor.

The protein resides in the membrane. It carries out the reaction 2 R'C(R)SH + O2 = R'C(R)S-S(R)CR' + H2O2. In terms of biological role, FAD-dependent sulfhydryl oxidase that catalyzes disulfide bond formation. The protein is Probable FAD-linked sulfhydryl oxidase R368 of Acanthamoeba polyphaga mimivirus (APMV).